The sequence spans 283 residues: 1D-myo-inositol 2-acetamido-2-deoxy-alpha-D-glucopyranoside deacetylase (283 aa).

H7, D10, and H148 together coordinate Zn(2+).

Belongs to the MshB deacetylase family. Zn(2+) is required as a cofactor.

The enzyme catalyses 1D-myo-inositol 2-acetamido-2-deoxy-alpha-D-glucopyranoside + H2O = 1D-myo-inositol 2-amino-2-deoxy-alpha-D-glucopyranoside + acetate. Functionally, catalyzes the deacetylation of 1D-myo-inositol 2-acetamido-2-deoxy-alpha-D-glucopyranoside (GlcNAc-Ins) in the mycothiol biosynthesis pathway. The sequence is that of 1D-myo-inositol 2-acetamido-2-deoxy-alpha-D-glucopyranoside deacetylase from Gordonia bronchialis (strain ATCC 25592 / DSM 43247 / BCRC 13721 / JCM 3198 / KCTC 3076 / NBRC 16047 / NCTC 10667) (Rhodococcus bronchialis).